A 380-amino-acid chain; its full sequence is Queuine tRNA-ribosyltransferase (380 aa).

The active-site Proton acceptor is D93. Substrate-binding positions include 93 to 97 (DSGGF), D147, Q198, and G225. The tract at residues 256–262 (GVGLPSN) is RNA binding. Catalysis depends on D275, which acts as the Nucleophile. The RNA binding; important for wobble base 34 recognition stretch occupies residues 280-284 (ARNGR). Zn(2+)-binding residues include C313, C315, C318, and H344.

It belongs to the queuine tRNA-ribosyltransferase family. As to quaternary structure, homodimer. Within each dimer, one monomer is responsible for RNA recognition and catalysis, while the other monomer binds to the replacement base PreQ1. The cofactor is Zn(2+).

The enzyme catalyses 7-aminomethyl-7-carbaguanine + guanosine(34) in tRNA = 7-aminomethyl-7-carbaguanosine(34) in tRNA + guanine. It functions in the pathway tRNA modification; tRNA-queuosine biosynthesis. Catalyzes the base-exchange of a guanine (G) residue with the queuine precursor 7-aminomethyl-7-deazaguanine (PreQ1) at position 34 (anticodon wobble position) in tRNAs with GU(N) anticodons (tRNA-Asp, -Asn, -His and -Tyr). Catalysis occurs through a double-displacement mechanism. The nucleophile active site attacks the C1' of nucleotide 34 to detach the guanine base from the RNA, forming a covalent enzyme-RNA intermediate. The proton acceptor active site deprotonates the incoming PreQ1, allowing a nucleophilic attack on the C1' of the ribose to form the product. After dissociation, two additional enzymatic reactions on the tRNA convert PreQ1 to queuine (Q), resulting in the hypermodified nucleoside queuosine (7-(((4,5-cis-dihydroxy-2-cyclopenten-1-yl)amino)methyl)-7-deazaguanosine). This Clostridium perfringens (strain 13 / Type A) protein is Queuine tRNA-ribosyltransferase.